Here is a 695-residue protein sequence, read N- to C-terminus: MAFETFSVALDKDKTLIFETGKIARQASGAILVKMNETWVFSSACAASLSEAVDFLPFRVDYQEKFSSAGRTSGGFLKREGRPSEREILVSRLIDRSLRPSFPNRLMQDIQVLSYVWSYDGKTLPDPLAICGASAALAISEVPQNCIIAGVRVGLVGGKWVINPTRDELSASKLDLVMAGTASAVLMIEGHCDFLTEEQVLEAIAFGQTYIAKICDAIEAWQKATGKQKNFSAVLDMPEDVQNVVSDFIREKFEKALSFRDKEALEQASKELEESVIANLVQEENSDFSLLNVKAAFKTAKSNQMRALIQDLGIRVDGRTTTEIRPISIETPFLPRTHGSCLFTRGETQSMAVCTLGGENMAQRFEDLNGDGAARFYLQYFFPPFSVGEVGRIGSPGRREIGHGKLAEKALSHVLPETSRFPYIIRLESNITESNGSSSMASVCGGCLALMDAGVPIKAPVAGIAMGLILDRDQAIILSDISGIEDHLGDMDFKVAGTAKGITAFQMDIKIEGITHKIMEQALAQAKQGRSHILNLMTQVLASPKGTVSKYAPRIETMQINTSKIATVIGPGGKQIRQIIERSGAQVDINDDGVINIAASTQESINKAKELIEGLTGEVEVGKVYNGRVTSIATFGVFVEVLPGKEGLCHISELSKQKVDNISDFVKEGDKLAVKLLSINEKGQLKLSHKATLED.

Asp486 and Asp492 together coordinate Mg(2+). The KH domain occupies 553-612; sequence PRIETMQINTSKIATVIGPGGKQIRQIIERSGAQVDINDDGVINIAASTQESINKAKELI. Residues 622-690 form the S1 motif domain; sequence GKVYNGRVTS…EKGQLKLSHK (69 aa).

This sequence belongs to the polyribonucleotide nucleotidyltransferase family. The cofactor is Mg(2+).

The protein resides in the cytoplasm. The enzyme catalyses RNA(n+1) + phosphate = RNA(n) + a ribonucleoside 5'-diphosphate. Its function is as follows. Involved in mRNA degradation. Catalyzes the phosphorolysis of single-stranded polyribonucleotides processively in the 3'- to 5'-direction. The protein is Polyribonucleotide nucleotidyltransferase of Chlamydia trachomatis serovar A (strain ATCC VR-571B / DSM 19440 / HAR-13).